The chain runs to 158 residues: Transcription elongation factor GreA (158 aa).

Residues 47-74 adopt a coiled-coil conformation; that stretch reads AEYHAAKEEQSHNEGRIAELEDKLARAD.

The protein belongs to the GreA/GreB family.

Necessary for efficient RNA polymerase transcription elongation past template-encoded arresting sites. The arresting sites in DNA have the property of trapping a certain fraction of elongating RNA polymerases that pass through, resulting in locked ternary complexes. Cleavage of the nascent transcript by cleavage factors such as GreA or GreB allows the resumption of elongation from the new 3'terminus. GreA releases sequences of 2 to 3 nucleotides. The chain is Transcription elongation factor GreA from Bradyrhizobium sp. (strain BTAi1 / ATCC BAA-1182).